The following is a 397-amino-acid chain: Enoyl-[acyl-carrier-protein] reductase [NADH] (397 aa).

NAD(+) is bound by residues 48 to 53 (GASTGY), 74 to 75 (FE), 111 to 112 (DA), and 139 to 140 (LA). Residue Tyr225 participates in substrate binding. Catalysis depends on Tyr235, which acts as the Proton donor. NAD(+)-binding positions include Lys244 and 273 to 275 (VVT).

This sequence belongs to the TER reductase family. Monomer.

It carries out the reaction a 2,3-saturated acyl-[ACP] + NAD(+) = a (2E)-enoyl-[ACP] + NADH + H(+). Its pathway is lipid metabolism; fatty acid biosynthesis. Involved in the final reduction of the elongation cycle of fatty acid synthesis (FAS II). Catalyzes the reduction of a carbon-carbon double bond in an enoyl moiety that is covalently linked to an acyl carrier protein (ACP). This chain is Enoyl-[acyl-carrier-protein] reductase [NADH], found in Pseudoalteromonas translucida (strain TAC 125).